Consider the following 381-residue polypeptide: uncharacterized protein (381 aa).

Disordered regions lie at residues Met1–Thr20 and Ile36–Glu381. Positions Asn9–Asp18 are enriched in acidic residues. Basic and acidic residues-rich tracts occupy residues Thr166 to Glu175 and Ser186 to Arg237. Ser339, Ser346, and Ser357 each carry phosphoserine. Over residues Lys364–Lys374 the composition is skewed to basic residues.

This is an uncharacterized protein from Arabidopsis thaliana (Mouse-ear cress).